A 161-amino-acid chain; its full sequence is Allophycocyanin alpha chain 2 (161 aa).

An N4-methylasparagine modification is found at N71. C81 lines the (2R,3E)-phycocyanobilin pocket.

It belongs to the phycobiliprotein family. Component of the phycobilisome. Heterodimer of an alpha and a beta chain. In terms of processing, contains one covalently linked bilin chromophore.

The protein resides in the cellular thylakoid membrane. Its function is as follows. Light-harvesting photosynthetic bile pigment-protein from the phycobiliprotein complex. Allophycocyanin has a maximum absorption at approximately 650 nanometers. The sequence is that of Allophycocyanin alpha chain 2 (apcA2) from Microchaete diplosiphon (Fremyella diplosiphon).